The primary structure comprises 391 residues: ATP-sensitive inward rectifier potassium channel 1 (391 aa).

Residues 1-77 (MGASERSVFR…IWTTVLDLKW (77 aa)) are Cytoplasmic-facing. Ser44 is modified (phosphoserine; by SGK1). The helical transmembrane segment at 78–102 (RYKMTVFITAFLGSWFLFGLLWYVV) threads the bilayer. At 103–127 (AYVHKDLPEFYPPDNRTPCVENING) the chain is on the extracellular side. N-linked (GlcNAc...) asparagine glycosylation occurs at Asn117. The segment at residues 128–139 (MTSAFLFSLETQ) is an intramembrane region (helical; Pore-forming). The pore-forming intramembrane region spans 140–146 (VTIGYGF). The Selectivity filter signature appears at 141-146 (TIGYGF). The Extracellular portion of the chain corresponds to 147-155 (RFVTEQCAT). Residues 156 to 177 (AIFLLIFQSILGVIINSFMCGA) form a helical membrane-spanning segment. Residues 178 to 391 (ILAKISRPKK…EVDETDDTQM (214 aa)) lie on the Cytoplasmic side of the membrane. The polyphosphoinositide (PIP2)-binding stretch occupies residues 180-207 (AKISRPKKRAKTITFSKNAVISKRGGKL). ATP is bound at residue 223 to 230 (GSHIYGKL).

The protein belongs to the inward rectifier-type potassium channel (TC 1.A.2.1) family. KCNJ1 subfamily. As to quaternary structure, interacts with SGK1 and SLC9A3R2/NHERF2. In terms of processing, phosphorylation at Ser-44 by SGK1 is necessary for its expression at the cell membrane. In terms of tissue distribution, mainly in kidney (renal cortex, medulla and papilla). Kidney.

The protein resides in the cell membrane. It carries out the reaction K(+)(in) = K(+)(out). Inhibited by WNK3. Activated by phosphatidylinositol 4,5 biphosphate (PtdIns(4,5)P2). Functionally, inward rectifier potassium channels are characterized by a greater tendency to allow potassium to flow into the cell rather than out of it. Their voltage dependence is regulated by the concentration of extracellular potassium; as external potassium is raised, the voltage range of the channel opening shifts to more positive voltages. The inward rectification is mainly due to the blockage of outward current by internal magnesium. This channel is activated by internal ATP and can be blocked by external barium. In the kidney, probably plays a major role in potassium homeostasis. In terms of biological role, inward rectifier potassium channels are characterized by a greater tendency to allow potassium to flow into the cell rather than out of it. Their voltage dependence is regulated by the concentration of extracellular potassium; as external potassium is raised, the voltage range of the channel opening shifts to more positive voltages. The protein is ATP-sensitive inward rectifier potassium channel 1 (Kcnj1) of Rattus norvegicus (Rat).